A 186-amino-acid polypeptide reads, in one-letter code: ATP synthase subunit delta (186 aa).

This sequence belongs to the ATPase delta chain family. In terms of assembly, F-type ATPases have 2 components, F(1) - the catalytic core - and F(0) - the membrane proton channel. F(1) has five subunits: alpha(3), beta(3), gamma(1), delta(1), epsilon(1). F(0) has three main subunits: a(1), b(2) and c(10-14). The alpha and beta chains form an alternating ring which encloses part of the gamma chain. F(1) is attached to F(0) by a central stalk formed by the gamma and epsilon chains, while a peripheral stalk is formed by the delta and b chains.

The protein resides in the cell membrane. In terms of biological role, f(1)F(0) ATP synthase produces ATP from ADP in the presence of a proton or sodium gradient. F-type ATPases consist of two structural domains, F(1) containing the extramembraneous catalytic core and F(0) containing the membrane proton channel, linked together by a central stalk and a peripheral stalk. During catalysis, ATP synthesis in the catalytic domain of F(1) is coupled via a rotary mechanism of the central stalk subunits to proton translocation. This protein is part of the stalk that links CF(0) to CF(1). It either transmits conformational changes from CF(0) to CF(1) or is implicated in proton conduction. The chain is ATP synthase subunit delta from Symbiobacterium thermophilum (strain DSM 24528 / JCM 14929 / IAM 14863 / T).